An 84-amino-acid chain; its full sequence is Exodeoxyribonuclease 7 small subunit (84 aa).

The disordered stretch occupies residues 65–84 (QEGDWTTSPFEPASGEPPGG).

It belongs to the XseB family. In terms of assembly, heterooligomer composed of large and small subunits.

The protein localises to the cytoplasm. It carries out the reaction Exonucleolytic cleavage in either 5'- to 3'- or 3'- to 5'-direction to yield nucleoside 5'-phosphates.. In terms of biological role, bidirectionally degrades single-stranded DNA into large acid-insoluble oligonucleotides, which are then degraded further into small acid-soluble oligonucleotides. In Syntrophobacter fumaroxidans (strain DSM 10017 / MPOB), this protein is Exodeoxyribonuclease 7 small subunit.